A 410-amino-acid chain; its full sequence is FBD-associated F-box protein At5g38590 (410 aa).

The F-box domain occupies 1 to 47; the sequence is MDKINGLPDDLLVKILSYVPTDIAVSTSILSKRWEFLWMWLPNLDYT. Positions 335–385 constitute an FBD domain; it reads GWNQPSSVPECLLSSLQIFKWPQYLGRPEDRDIAVYILKNARHLKKTTILA.

This chain is FBD-associated F-box protein At5g38590, found in Arabidopsis thaliana (Mouse-ear cress).